A 408-amino-acid chain; its full sequence is tRNA wybutosine-synthesizing protein 2 homolog (408 aa).

Residues serine 201, lysine 208, glutamate 248, and 276 to 277 each bind S-adenosyl-L-methionine; that span reads DN.

This sequence belongs to the class I-like SAM-binding methyltransferase superfamily. TRM5/TYW2 family.

It carries out the reaction 4-demethylwyosine(37) in tRNA(Phe) + S-adenosyl-L-methionine = 4-demethyl-7-[(3S)-3-amino-3-carboxypropyl]wyosine(37) in tRNA(Phe) + S-methyl-5'-thioadenosine + H(+). The protein operates within tRNA modification; wybutosine-tRNA(Phe) biosynthesis. In terms of biological role, S-adenosyl-L-methionine-dependent transferase that acts as a component of the wybutosine biosynthesis pathway. Wybutosine is a hyper modified guanosine with a tricyclic base found at the 3'-position adjacent to the anticodon of eukaryotic phenylalanine tRNA. Catalyzes the transfer of the alpha-amino-alpha-carboxypropyl (acp) group from S-adenosyl-L-methionine to the C-7 position of 4-demethylwyosine (imG-14) to produce wybutosine-86. This is tRNA wybutosine-synthesizing protein 2 homolog (trmt12) from Danio rerio (Zebrafish).